The sequence spans 286 residues: Elongation factor Ts (286 aa).

Positions 79–82 (TDFV) are involved in Mg(2+) ion dislocation from EF-Tu.

This sequence belongs to the EF-Ts family.

The protein localises to the cytoplasm. Its function is as follows. Associates with the EF-Tu.GDP complex and induces the exchange of GDP to GTP. It remains bound to the aminoacyl-tRNA.EF-Tu.GTP complex up to the GTP hydrolysis stage on the ribosome. The polypeptide is Elongation factor Ts (Wolbachia sp. subsp. Drosophila simulans (strain wRi)).